Reading from the N-terminus, the 1173-residue chain is DNA polymerase catalytic subunit (1173 aa).

Disordered regions lie at residues 554 to 625 (PSLP…SASG) and 1123 to 1144 (EGPG…PPRK). Positions 564-578 (GGDGAGLEGGDGGTA) are enriched in gly residues. Over residues 591–606 (DGEDEDDPEGGDEGEN) the composition is skewed to acidic residues. Basic and acidic residues predominate over residues 607 to 618 (GECRENGLEKEG). Positions 1123–1138 (EGPGRGEGLGVGGGEG) are enriched in gly residues.

The protein belongs to the DNA polymerase type-B family.

It is found in the host nucleus. It carries out the reaction DNA(n) + a 2'-deoxyribonucleoside 5'-triphosphate = DNA(n+1) + diphosphate. In Rattus, this protein is DNA polymerase catalytic subunit (UL54).